The chain runs to 306 residues: Pantothenate kinase (306 aa).

90 to 97 (GSVAVGKS) serves as a coordination point for ATP.

This sequence belongs to the prokaryotic pantothenate kinase family.

It localises to the cytoplasm. It carries out the reaction (R)-pantothenate + ATP = (R)-4'-phosphopantothenate + ADP + H(+). It functions in the pathway cofactor biosynthesis; coenzyme A biosynthesis; CoA from (R)-pantothenate: step 1/5. The polypeptide is Pantothenate kinase (coaA) (Listeria innocua serovar 6a (strain ATCC BAA-680 / CLIP 11262)).